The following is a 252-amino-acid chain: Imidazole glycerol phosphate synthase subunit HisF (252 aa).

Active-site residues include aspartate 11 and aspartate 130.

Belongs to the HisA/HisF family. In terms of assembly, heterodimer of HisH and HisF.

The protein resides in the cytoplasm. It catalyses the reaction 5-[(5-phospho-1-deoxy-D-ribulos-1-ylimino)methylamino]-1-(5-phospho-beta-D-ribosyl)imidazole-4-carboxamide + L-glutamine = D-erythro-1-(imidazol-4-yl)glycerol 3-phosphate + 5-amino-1-(5-phospho-beta-D-ribosyl)imidazole-4-carboxamide + L-glutamate + H(+). The protein operates within amino-acid biosynthesis; L-histidine biosynthesis; L-histidine from 5-phospho-alpha-D-ribose 1-diphosphate: step 5/9. IGPS catalyzes the conversion of PRFAR and glutamine to IGP, AICAR and glutamate. The HisF subunit catalyzes the cyclization activity that produces IGP and AICAR from PRFAR using the ammonia provided by the HisH subunit. This Petrotoga mobilis (strain DSM 10674 / SJ95) protein is Imidazole glycerol phosphate synthase subunit HisF.